The following is a 270-amino-acid chain: Proteasome subunit alpha type-1 (270 aa).

The tract at residues 239-270 (SMEAAEEAPAAEAESSSMQEEDKGTDAAPMDI) is disordered. Residues 245-256 (EAPAAEAESSSM) show a composition bias toward low complexity.

It belongs to the peptidase T1A family. The 26S proteasome consists of a 20S proteasome core and two 19S regulatory subunits. The 20S proteasome core is composed of 28 subunits that are arranged in four stacked rings, resulting in a barrel-shaped structure. The two end rings are each formed by seven alpha subunits, and the two central rings are each formed by seven beta subunits. The catalytic chamber with the active sites is on the inside of the barrel.

The protein localises to the cytoplasm. It localises to the nucleus. Its function is as follows. The proteasome is a multicatalytic proteinase complex which is characterized by its ability to cleave peptides with Arg, Phe, Tyr, Leu, and Glu adjacent to the leaving group at neutral or slightly basic pH. The proteasome has an ATP-dependent proteolytic activity. The polypeptide is Proteasome subunit alpha type-1 (PAF1) (Oryza sativa subsp. japonica (Rice)).